We begin with the raw amino-acid sequence, 256 residues long: MILCIDVGNSHIYGGVFDGDEIKLRFRHTSKVSTSDELGIFLKSVLRENNCSPETIRKIAICSVVPQVDYSLRSACVKYFSIDPFLLQAGVKTGLNIKYRNPVEVGADRIANAIAATHSFPNQNIIVIDFGTATTFCAISHKKAYLGGAILPGLRLSADALSKNTAKLPSVEIIKTESVVGRSTIESIQSGVYYGVLGACKELIQRIHHEAFNGDKILILATGGFASLFDKQGLYDHLVPDLVLQGIRLAAMMNTA.

Aspartate 6 to tyrosine 13 is an ATP binding site. Residues tyrosine 99 and glycine 106–arginine 109 each bind substrate. Aspartate 108 acts as the Proton acceptor in catalysis. Residue aspartate 129 participates in K(+) binding. Threonine 132 contacts ATP. Threonine 184 contributes to the substrate binding site.

It belongs to the type III pantothenate kinase family. Homodimer. NH4(+) is required as a cofactor. The cofactor is K(+).

The protein resides in the cytoplasm. It carries out the reaction (R)-pantothenate + ATP = (R)-4'-phosphopantothenate + ADP + H(+). It functions in the pathway cofactor biosynthesis; coenzyme A biosynthesis; CoA from (R)-pantothenate: step 1/5. Its function is as follows. Catalyzes the phosphorylation of pantothenate (Pan), the first step in CoA biosynthesis. In Legionella pneumophila (strain Corby), this protein is Type III pantothenate kinase.